The sequence spans 110 residues: Ig lambda-1 chain V region S178 (110 aa).

Positions 1–106 (QAVVTQESAL…RWVFGGGTKL (106 aa)) constitute an Ig-like domain.

This chain is Ig lambda-1 chain V region S178, found in Mus musculus (Mouse).